A 263-amino-acid polypeptide reads, in one-letter code: 3-deoxy-manno-octulosonate cytidylyltransferase (263 aa).

This sequence belongs to the KdsB family.

It is found in the cytoplasm. It carries out the reaction 3-deoxy-alpha-D-manno-oct-2-ulosonate + CTP = CMP-3-deoxy-beta-D-manno-octulosonate + diphosphate. It functions in the pathway nucleotide-sugar biosynthesis; CMP-3-deoxy-D-manno-octulosonate biosynthesis; CMP-3-deoxy-D-manno-octulosonate from 3-deoxy-D-manno-octulosonate and CTP: step 1/1. It participates in bacterial outer membrane biogenesis; lipopolysaccharide biosynthesis. Functionally, activates KDO (a required 8-carbon sugar) for incorporation into bacterial lipopolysaccharide in Gram-negative bacteria. The polypeptide is 3-deoxy-manno-octulosonate cytidylyltransferase (Burkholderia thailandensis (strain ATCC 700388 / DSM 13276 / CCUG 48851 / CIP 106301 / E264)).